A 528-amino-acid chain; its full sequence is Probable serine protease HtrA1 (528 aa).

A disordered region spans residues 1–70 (MDTRVDTDNA…RPSGVQGSFV (70 aa)). The Cytoplasmic portion of the chain corresponds to 1–178 (MDTRVDTDNA…DVLFGGKVSY (178 aa)). A compositionally biased stretch (gly residues) spans 31–40 (NNGGPNGGGR). A helical membrane pass occupies residues 179–199 (LALGILVAIALVIGGIGGVIG). At 200–528 (RKTAEVVDAF…LTVKPDPDST (329 aa)) the chain is on the periplasmic side. Catalysis depends on charge relay system residues His-270, Asp-306, and Ser-387. The region spanning 426–487 (LVANSLIKDG…VIVKVGNRAV (62 aa)) is the PDZ domain.

The protein belongs to the peptidase S1C family. As to quaternary structure, the C-terminal region exhibits both monomeric and trimeric forms in solution.

Its subcellular location is the cell inner membrane. The enzyme catalyses Acts on substrates that are at least partially unfolded. The cleavage site P1 residue is normally between a pair of hydrophobic residues, such as Val-|-Val.. In terms of biological role, essential protein that may act as a regulatory protease that is conditionally activated upon appropriate environmental triggers. The polypeptide is Probable serine protease HtrA1 (Mycobacterium tuberculosis (strain ATCC 25618 / H37Rv)).